The following is a 337-amino-acid chain: Retrovirus-related Pol polyprotein from type-1 retrotransposable element R1 (337 aa).

The Reverse transcriptase domain occupies 1–118; it reads GCPQGSISGP…KSARYLGVCM (118 aa). Residues 253 to 337 are nucleic acid-binding endonuclease; it reads KRARSCKLMK…ACPCGAPRED (85 aa).

The enzyme catalyses DNA(n) + a 2'-deoxyribonucleoside 5'-triphosphate = DNA(n+1) + diphosphate. The chain is Retrovirus-related Pol polyprotein from type-1 retrotransposable element R1 from Nasonia vitripennis (Parasitic wasp).